The following is a 318-amino-acid chain: Olfactory receptor 13C2 (318 aa).

Residues 1 to 25 lie on the Extracellular side of the membrane; the sequence is MEWENHTILVEFFLKGLSGHPRLEL. A glycan (N-linked (GlcNAc...) asparagine) is linked at Asn-5. Residues 26–46 traverse the membrane as a helical segment; the sequence is LFFVLIFIMYVVILLGNGTLI. The Cytoplasmic portion of the chain corresponds to 47–54; it reads LISILDPH. A helical transmembrane segment spans residues 55–75; the sequence is LHTPMYFFLGNLSFLDICYTT. Residues 76-99 lie on the Extracellular side of the membrane; sequence TSIPSTLVSFLSERKTISLSGCAV. Cys-97 and Cys-189 are joined by a disulfide. A helical membrane pass occupies residues 100 to 120; that stretch reads QMFLGLAMGTTECVLLGMMAF. Over 121 to 139 the chain is Cytoplasmic; it reads DRYVAICNPLRYPIIMSKD. A helical membrane pass occupies residues 140 to 160; the sequence is AYVPMAAGSWIIGAVNSAVQS. Residues 161-197 lie on the Extracellular side of the membrane; the sequence is VFVVQLPFCRNNIINHFTCEILAVMKLACADISDNEF. A helical transmembrane segment spans residues 198–217; that stretch reads IMLVATTLFILTPLLLIIVS. The Cytoplasmic segment spans residues 218-237; that stretch reads YTLIIVSIFKISSSEGRSKA. A helical membrane pass occupies residues 238–258; the sequence is SSTCSAHLTVVIIFYGTILFM. The Extracellular segment spans residues 259 to 277; the sequence is YMKPKSKETLNSDDLDATD. The helical transmembrane segment at 278 to 298 threads the bilayer; sequence KIISMFYGVMTPMMNPLIYSL. The Cytoplasmic segment spans residues 299 to 318; sequence RNKDVKEAVKHLLNRRFFSK.

The protein belongs to the G-protein coupled receptor 1 family.

It localises to the cell membrane. Odorant receptor. The chain is Olfactory receptor 13C2 (OR13C2) from Homo sapiens (Human).